A 111-amino-acid polypeptide reads, in one-letter code: Ribonuclease P protein component (111 aa).

The protein belongs to the RnpA family. In terms of assembly, consists of a catalytic RNA component (M1 or rnpB) and a protein subunit.

It carries out the reaction Endonucleolytic cleavage of RNA, removing 5'-extranucleotides from tRNA precursor.. In terms of biological role, RNaseP catalyzes the removal of the 5'-leader sequence from pre-tRNA to produce the mature 5'-terminus. It can also cleave other RNA substrates such as 4.5S RNA. The protein component plays an auxiliary but essential role in vivo by binding to the 5'-leader sequence and broadening the substrate specificity of the ribozyme. The sequence is that of Ribonuclease P protein component from Mycoplasmopsis pulmonis (strain UAB CTIP) (Mycoplasma pulmonis).